A 196-amino-acid chain; its full sequence is Probable molybdenum cofactor guanylyltransferase (196 aa).

Residues 7-9 (LAG), Lys19, Asp68, and Asp93 contribute to the GTP site. Asp93 is a Mg(2+) binding site.

The protein belongs to the MobA family. Mg(2+) serves as cofactor.

It localises to the cytoplasm. It carries out the reaction Mo-molybdopterin + GTP + H(+) = Mo-molybdopterin guanine dinucleotide + diphosphate. Functionally, transfers a GMP moiety from GTP to Mo-molybdopterin (Mo-MPT) cofactor (Moco or molybdenum cofactor) to form Mo-molybdopterin guanine dinucleotide (Mo-MGD) cofactor. This Pyrococcus furiosus (strain ATCC 43587 / DSM 3638 / JCM 8422 / Vc1) protein is Probable molybdenum cofactor guanylyltransferase.